The primary structure comprises 161 residues: Small ribosomal subunit protein uS19 (161 aa).

The segment covering methionine 1–glutamine 19 has biased composition (basic residues). Residues methionine 1 to arginine 26 are disordered.

The protein belongs to the universal ribosomal protein uS19 family.

In terms of biological role, protein S19 forms a complex with S13 that binds strongly to the 16S ribosomal RNA. This chain is Small ribosomal subunit protein uS19, found in Methanococcus maripaludis (strain C5 / ATCC BAA-1333).